The primary structure comprises 704 residues: SH3KBP1-binding protein 1 (704 aa).

Ala-2 carries the N-acetylalanine modification. The 70-residue stretch at 19–88 (EVIHLNVGGK…LRTKELDPRG (70 aa)) folds into the BTB domain. Positions 146–165 (VGPQQIGGRPAPVRRSNTMP) are disordered. At Thr-163 the chain carries Phosphothreonine. 5 WD repeats span residues 233-280 (RLDW…GGSE), 283-322 (VFHL…WQVQ), 324-359 (VQPI…LRMK), 428-466 (VHRS…GMIS), and 548-586 (LECE…DGLG). The tract at residues 609–704 (PLASSRGSFP…LKKTLNETSF (96 aa)) is disordered. The segment covering 612–631 (SSRGSFPSPSPRTSLTSLHS) has biased composition (low complexity). The PXXXPR signature appears at 618-623 (PSPSPR). Residues Ser-644 and Ser-646 each carry the phosphoserine modification. Residues 678–683 (PTPAPR) carry the PXXXPR motif. Phosphothreonine is present on Thr-693.

It belongs to the KCTD3 family. In terms of assembly, monomer. Interacts with CUL3; interaction is direct and forms a 5:5 heterodecamer. Interacts (via PXXXPR motifs) with SH3KBP1 (via SH3 domains). Directly interacts with cathepsin B/CTSB.

The protein resides in the lysosome. Its function is as follows. Inhibits CBL-SH3KBP1 complex mediated down-regulation of EGFR signaling by sequestration of SH3KBP1. Binds to SH3KBP1 and prevents its interaction with CBL and inhibits translocation of SH3KBP1 to EGFR containing vesicles upon EGF stimulation. The sequence is that of SH3KBP1-binding protein 1 (Shkbp1) from Mus musculus (Mouse).